The primary structure comprises 131 residues: AQLQNLVLKDREATPNDHTFVPRDIRDNVGEVVESTGVPIGESRFTISLRKTSNGRYKSTLKLVVPVVQSQTVNGIVTPVVVRTSYVTVDFDYDARSTTKERNNFVGMIADALKADLMLVHDTIVNLQGVY.

Glutamine 2 and tyrosine 131 together coordinate Ca(2+).

It belongs to the Leviviricetes capsid protein family. In terms of assembly, homodimer. The capsid proteins form dimers that assemble by group of 5. Twelve such pentamers are linked together with free dimers. The homodimers binds to the viral RNA via an operator hairpin, but also to many other RNA sequences in the viral genome; this interaction probably shifts the virus from the replicative to the assembly phase and ensures specific encapsidation of the viral genome.

The protein resides in the virion. Its function is as follows. Capsid protein self-assembles to form an icosahedral capsid with a T=3 symmetry, about 26 nm in diameter, and consisting of 89 capsid proteins dimers (178 capsid proteins). Involved in viral genome encapsidation through the interaction between a capsid protein dimer and the multiple packaging signals present in the RNA genome. The capsid also contains 1 copy of the A2 maturation protein. Acts as a translational repressor of viral replicase synthesis late in infection. This latter function is the result of capsid protein interaction with an RNA hairpin which contains the replicase ribosome-binding site. The protein is Capsid protein of Pseudomonas phage PRR1 (Bacteriophage PRR1).